The following is a 513-amino-acid chain: Xylose import ATP-binding protein XylG (513 aa).

2 ABC transporter domains span residues 5-242 (LEMK…VGRE) and 259-505 (LRIE…LRSE). 37-44 (GENGSGKS) lines the ATP pocket.

It belongs to the ABC transporter superfamily. Xylose importer (TC 3.A.1.2.4) family. The complex is composed of two ATP-binding proteins (XylG), two transmembrane proteins (XylH) and a solute-binding protein (XylF).

Its subcellular location is the cell inner membrane. It catalyses the reaction D-xylose(out) + ATP + H2O = D-xylose(in) + ADP + phosphate + H(+). In terms of biological role, part of the ABC transporter complex XylFGH involved in xylose import. Responsible for energy coupling to the transport system. This chain is Xylose import ATP-binding protein XylG, found in Escherichia coli O6:K15:H31 (strain 536 / UPEC).